The sequence spans 642 residues: Threonine--tRNA ligase (642 aa).

A TGS domain is found at 1–61; it reads MPVITLPDGS…ETDAELSIIT (61 aa). A catalytic region spans residues 243–534; sequence DHRKIGKQLD…LIEEYAGRFP (292 aa). Zn(2+) is bound by residues Cys334, His385, and His511.

It belongs to the class-II aminoacyl-tRNA synthetase family. In terms of assembly, homodimer. The cofactor is Zn(2+).

The protein resides in the cytoplasm. It carries out the reaction tRNA(Thr) + L-threonine + ATP = L-threonyl-tRNA(Thr) + AMP + diphosphate + H(+). Functionally, catalyzes the attachment of threonine to tRNA(Thr) in a two-step reaction: L-threonine is first activated by ATP to form Thr-AMP and then transferred to the acceptor end of tRNA(Thr). Also edits incorrectly charged L-seryl-tRNA(Thr). This is Threonine--tRNA ligase from Shewanella putrefaciens (strain CN-32 / ATCC BAA-453).